Reading from the N-terminus, the 584-residue chain is Arginine--tRNA ligase (584 aa).

Positions 126–136 (PNIAKEMHVGH) match the 'HIGH' region motif.

It belongs to the class-I aminoacyl-tRNA synthetase family. In terms of assembly, monomer.

It is found in the cytoplasm. The enzyme catalyses tRNA(Arg) + L-arginine + ATP = L-arginyl-tRNA(Arg) + AMP + diphosphate. In Synechococcus elongatus (strain ATCC 33912 / PCC 7942 / FACHB-805) (Anacystis nidulans R2), this protein is Arginine--tRNA ligase.